A 186-amino-acid chain; its full sequence is Ferritin heavy chain (186 aa).

Residues 16-165 form the Ferritin-like diiron domain; that stretch reads QNYHQDSEAA…DHVTNLRKMG (150 aa). E33, E68, H71, E113, and Q147 together coordinate Fe cation. Phosphoserine is present on S184.

It belongs to the ferritin family. As to quaternary structure, oligomer of 24 subunits. There are two types of subunits: L (light) chain and H (heavy) chain. The major chain can be light or heavy, depending on the species and tissue type. The functional molecule forms a roughly spherical shell with a diameter of 12 nm and contains a central cavity into which the insoluble mineral iron core is deposited. Interacts with NCOA4; NCOA4 promotes targeting of the iron-binding ferritin complex to autolysosomes following starvation or iron depletion.

The protein resides in the cytoplasm. It is found in the lysosome. It localises to the cytoplasmic vesicle. The protein localises to the autophagosome. It catalyses the reaction 4 Fe(2+) + O2 + 4 H(+) = 4 Fe(3+) + 2 H2O. Its function is as follows. Stores iron in a soluble, non-toxic, readily available form. Important for iron homeostasis. Has ferroxidase activity. Iron is taken up in the ferrous form and deposited as ferric hydroxides after oxidation. Also plays a role in delivery of iron to cells. Mediates iron uptake in capsule cells of the developing kidney. Delivery to lysosomes is mediated by the cargo receptor NCOA4 for autophagic degradation and release of iron. The chain is Ferritin heavy chain (FTH1) from Cricetulus griseus (Chinese hamster).